Here is a 436-residue protein sequence, read N- to C-terminus: Adenosylhomocysteinase (436 aa).

Substrate-binding residues include T62, D136, and E161. Residue 162–164 coordinates NAD(+); it reads TTT. Residues K191 and D195 each coordinate substrate. Residues N196, 225–230, E248, N283, 304–306, and N352 each bind NAD(+); these read GFGDVG and IGH.

This sequence belongs to the adenosylhomocysteinase family. NAD(+) is required as a cofactor.

It is found in the cytoplasm. It carries out the reaction S-adenosyl-L-homocysteine + H2O = L-homocysteine + adenosine. The protein operates within amino-acid biosynthesis; L-homocysteine biosynthesis; L-homocysteine from S-adenosyl-L-homocysteine: step 1/1. Functionally, may play a key role in the regulation of the intracellular concentration of adenosylhomocysteine. This is Adenosylhomocysteinase from Leptospira interrogans serogroup Icterohaemorrhagiae serovar copenhageni (strain Fiocruz L1-130).